Here is a 449-residue protein sequence, read N- to C-terminus: UDP-N-acetylmuramoylalanine--D-glutamate ligase (449 aa).

118–124 serves as a coordination point for ATP; the sequence is GSNGKTT.

This sequence belongs to the MurCDEF family.

The protein resides in the cytoplasm. It catalyses the reaction UDP-N-acetyl-alpha-D-muramoyl-L-alanine + D-glutamate + ATP = UDP-N-acetyl-alpha-D-muramoyl-L-alanyl-D-glutamate + ADP + phosphate + H(+). The protein operates within cell wall biogenesis; peptidoglycan biosynthesis. Its function is as follows. Cell wall formation. Catalyzes the addition of glutamate to the nucleotide precursor UDP-N-acetylmuramoyl-L-alanine (UMA). In Oceanobacillus iheyensis (strain DSM 14371 / CIP 107618 / JCM 11309 / KCTC 3954 / HTE831), this protein is UDP-N-acetylmuramoylalanine--D-glutamate ligase.